The chain runs to 96 residues: MTSALENYINRTVAVITSDGRMIVGTLKGFDQTINLILDESHERVFSSSQGVEQVVLGLYIVRGDNVAVIGEIDEETDSALDLGNIRAEPLNSVAH.

The region spanning 1–76 (MTSALENYIN…VAVIGEIDEE (76 aa)) is the Sm domain. Residue threonine 2 is modified to N-acetylthreonine.

This sequence belongs to the snRNP Sm proteins family. As to quaternary structure, component of the precatalytic spliceosome (spliceosome B complex). Component of the U4/U6-U5 tri-snRNP complex, a building block of the precatalytic spliceosome (spliceosome B complex). The U4/U6-U5 tri-snRNP complex is composed of the U4, U6 and U5 snRNAs and at least PRPF3, PRPF4, PRPF6, PRPF8, PRPF31, SNRNP200, TXNL4A, SNRNP40, SNRPB, SNRPD1, SNRPD2, SNRPD3, SNRPE, SNRPF, SNRPG, DDX23, CD2BP2, PPIH, SNU13, EFTUD2, SART1 and USP39, plus LSM2, LSM3, LSM4, LSM5, LSM6, LSM7 and LSM8. LSM2, LSM3, LSM4, LSM5, LSM6, LSM7 and LSM8 form a heptameric, ring-shaped subcomplex (the LSM2-8 complex) that is part of the U4/U6-U5 tri-snRNP complex and the precatalytic spliceosome.

It is found in the nucleus. Functionally, plays a role in pre-mRNA splicing as component of the U4/U6-U5 tri-snRNP complex that is involved in spliceosome assembly, and as component of the precatalytic spliceosome (spliceosome B complex). The heptameric LSM2-8 complex binds specifically to the 3'-terminal U-tract of U6 snRNA. The sequence is that of U6 snRNA-associated Sm-like protein LSm8 (LSM8) from Bos taurus (Bovine).